The following is a 1116-amino-acid chain: uncharacterized protein (1116 aa).

Residues 3–20 (FFLTFLLFLFTLFSLFVY) form a helical membrane-spanning segment.

It localises to the membrane. This is an uncharacterized protein from Aquifex aeolicus (strain VF5).